The primary structure comprises 1323 residues: Lysine-specific demethylase 3A (1323 aa).

Disordered regions lie at residues 255–287 (TRTG…PSMC), 307–337 (ATPS…PQGC), and 385–416 (SEPK…GLPK). Position 264 is a phosphoserine (serine 264). 2 stretches are compositionally biased toward polar residues: residues 266-283 (ENNG…SEAS) and 307-327 (ATPS…NSPP). Serine 325 carries the phosphoserine modification. Phosphoserine is present on serine 446. Disordered stretches follow at residues 468 to 487 (AEKK…LKET) and 495 to 517 (SCCT…LTDP). Composition is skewed to polar residues over residues 477-486 (LGSQSQNLKE) and 495-507 (SCCT…TQTP). A C6-type zinc finger spans residues 662 to 687 (CDVCDTTIFNLHWVCPRCGFGVCVDC). Residues 885–889 (LRNLL) carry the LXXLL motif motif. Lysine 895 bears the N6-acetyllysine mark. Residues 1060-1283 (MPSRFDDLMA…HCFWLTQEFR (224 aa)) enclose the JmjC domain. Fe cation contacts are provided by histidine 1122, aspartate 1124, and histidine 1251.

This sequence belongs to the JHDM2 histone demethylase family. In terms of assembly, interacts with VRK1. It depends on Fe(2+) as a cofactor. Highly expressed in testis (at protein level). Also expressed at high levels in tissues responsive to sympathetic nerve activity such as brown adipose tissue and skeletal muscle.

It localises to the cytoplasm. The protein localises to the nucleus. It catalyses the reaction N(6),N(6)-dimethyl-L-lysyl(9)-[histone H3] + 2 2-oxoglutarate + 2 O2 = L-lysyl(9)-[histone H3] + 2 formaldehyde + 2 succinate + 2 CO2. Its function is as follows. Histone demethylase that specifically demethylates 'Lys-9' of histone H3, thereby playing a central role in histone code. Preferentially demethylates mono- and dimethylated H3 'Lys-9' residue, with a preference for dimethylated residue, while it has weak or no activity on trimethylated H3 'Lys-9'. Demethylation of Lys residue generates formaldehyde and succinate. Involved in hormone-dependent transcriptional activation, by participating in recruitment to androgen-receptor target genes, resulting in H3 'Lys-9' demethylation and transcriptional activation. Involved in spermatogenesis by regulating expression of target genes such as PRM1 and TNP1 which are required for packaging and condensation of sperm chromatin. Involved in obesity resistance through regulation of metabolic genes such as PPARA and UCP1. This Mus musculus (Mouse) protein is Lysine-specific demethylase 3A (Kdm3a).